Reading from the N-terminus, the 145-residue chain is Putative pre-16S rRNA nuclease (145 aa).

Belongs to the YqgF nuclease family.

It localises to the cytoplasm. In terms of biological role, could be a nuclease involved in processing of the 5'-end of pre-16S rRNA. In Pseudomonas fluorescens (strain SBW25), this protein is Putative pre-16S rRNA nuclease.